Here is a 306-residue protein sequence, read N- to C-terminus: Acetaldehyde dehydrogenase 3 (306 aa).

Cysteine 131 acts as the Acyl-thioester intermediate in catalysis. NAD(+)-binding positions include 162–170 (SVGPGTRKN) and asparagine 273.

Belongs to the acetaldehyde dehydrogenase family.

The enzyme catalyses acetaldehyde + NAD(+) + CoA = acetyl-CoA + NADH + H(+). The protein is Acetaldehyde dehydrogenase 3 of Burkholderia lata (strain ATCC 17760 / DSM 23089 / LMG 22485 / NCIMB 9086 / R18194 / 383).